A 368-amino-acid polypeptide reads, in one-letter code: Peptide chain release factor 2 (368 aa).

Gln-250 bears the N5-methylglutamine mark.

The protein belongs to the prokaryotic/mitochondrial release factor family. In terms of processing, methylated by PrmC. Methylation increases the termination efficiency of RF2.

It is found in the cytoplasm. Peptide chain release factor 2 directs the termination of translation in response to the peptide chain termination codons UGA and UAA. The protein is Peptide chain release factor 2 of Rickettsia felis (strain ATCC VR-1525 / URRWXCal2) (Rickettsia azadi).